Here is a 496-residue protein sequence, read N- to C-terminus: Tripartite motif-containing protein 30A (496 aa).

An RING-type zinc finger spans residues 15–59 (CPICLELLKEPVSADCNHSFCRACITLNYESNRNTDGKGNCPVCR). A B box-type zinc finger spans residues 91 to 132 (QKVNICAQHGEKLRLFCRKDMMVICWLCERSQEHRGHQTALI). 4 residues coordinate Zn(2+): cysteine 96, histidine 99, cysteine 118, and histidine 124. The stretch at 173-239 (NQIQINVENV…RDLISDVEHH (67 aa)) forms a coiled coil. Positions 205 to 210 (KKEKKE) are highly hydrophilic. Residues 268-276 (TVPQKRKRT) carry the Nuclear localization signal motif. The region spanning 281 to 496 (DLKGMLQVYQ…EPMTICGPPS (216 aa)) is the B30.2/SPRY domain.

Homomultimer. Interacts with NR2C2/TAK1, TAB2 and TAB3. Does not interact with NLRP3, NLRC4 or TAB1. As to expression, highly expressed in spleen and lymph nodes (at protein level).

Its subcellular location is the cytoplasm. The protein resides in the nucleus. Its function is as follows. Trans-acting factor that regulates gene expression of interleukin 2 receptor alpha chain. May affect IL2R-alpha expression through cis-acting negative regulatory elements or through competition with proteins that bind to enhancer or activator sequences. Negatively regulates Toll-like receptor (TLR)-mediated activation of NFKB by promoting degradation of TAB2 and TAB3 and preventing TRAF6 autoubiquitination. Negatively regulates production of reactive oxygen species (ROS) which inhibits activation of the NLRP3 inflammasome complex. This, in turn, regulates activation of CASP1 and subsequent cleavage of IL1B and IL18. No activity detected against a range of retroviruses including a number of lentiviruses, gammaretroviruses and betaretroviruses. The sequence is that of Tripartite motif-containing protein 30A (Trim30a) from Mus musculus (Mouse).